A 20-amino-acid chain; its full sequence is Cytochrome c oxidase subunit 6A2, mitochondrial (20 aa).

The tract at residues 1-20 is disordered; sequence ASGAKGDHGGAGASTXXLLT.

It belongs to the cytochrome c oxidase subunit 6A family. In terms of assembly, component of the cytochrome c oxidase (complex IV, CIV), a multisubunit enzyme composed of 14 subunits. The complex is composed of a catalytic core of 3 subunits MT-CO1, MT-CO2 and MT-CO3, encoded in the mitochondrial DNA, and 11 supernumerary subunits COX4I, COX5A, COX5B, COX6A, COX6B, COX6C, COX7A, COX7B, COX7C, COX8 and NDUFA4, which are encoded in the nuclear genome. The complex exists as a monomer or a dimer and forms supercomplexes (SCs) in the inner mitochondrial membrane with NADH-ubiquinone oxidoreductase (complex I, CI) and ubiquinol-cytochrome c oxidoreductase (cytochrome b-c1 complex, complex III, CIII), resulting in different assemblies (supercomplex SCI(1)III(2)IV(1) and megacomplex MCI(2)III(2)IV(2)). As to expression, heart specific isoform.

It localises to the mitochondrion inner membrane. The protein operates within energy metabolism; oxidative phosphorylation. Functionally, component of the cytochrome c oxidase, the last enzyme in the mitochondrial electron transport chain which drives oxidative phosphorylation. The respiratory chain contains 3 multisubunit complexes succinate dehydrogenase (complex II, CII), ubiquinol-cytochrome c oxidoreductase (cytochrome b-c1 complex, complex III, CIII) and cytochrome c oxidase (complex IV, CIV), that cooperate to transfer electrons derived from NADH and succinate to molecular oxygen, creating an electrochemical gradient over the inner membrane that drives transmembrane transport and the ATP synthase. Cytochrome c oxidase is the component of the respiratory chain that catalyzes the reduction of oxygen to water. Electrons originating from reduced cytochrome c in the intermembrane space (IMS) are transferred via the dinuclear copper A center (CU(A)) of subunit 2 and heme A of subunit 1 to the active site in subunit 1, a binuclear center (BNC) formed by heme A3 and copper B (CU(B)). The BNC reduces molecular oxygen to 2 water molecules unsing 4 electrons from cytochrome c in the IMS and 4 protons from the mitochondrial matrix. Plays a role in the assembly and stabilization of complex IV. This chain is Cytochrome c oxidase subunit 6A2, mitochondrial (COX6A2), found in Canis lupus familiaris (Dog).